The following is a 214-amino-acid chain: Probable transaldolase (214 aa).

The Schiff-base intermediate with substrate role is filled by K83.

The protein belongs to the transaldolase family. Type 3B subfamily.

It localises to the cytoplasm. The enzyme catalyses D-sedoheptulose 7-phosphate + D-glyceraldehyde 3-phosphate = D-erythrose 4-phosphate + beta-D-fructose 6-phosphate. It participates in carbohydrate degradation; pentose phosphate pathway; D-glyceraldehyde 3-phosphate and beta-D-fructose 6-phosphate from D-ribose 5-phosphate and D-xylulose 5-phosphate (non-oxidative stage): step 2/3. In terms of biological role, transaldolase is important for the balance of metabolites in the pentose-phosphate pathway. The sequence is that of Probable transaldolase from Citrifermentans bemidjiense (strain ATCC BAA-1014 / DSM 16622 / JCM 12645 / Bem) (Geobacter bemidjiensis).